The chain runs to 110 residues: Large ribosomal subunit protein uL22 (110 aa).

It belongs to the universal ribosomal protein uL22 family. Part of the 50S ribosomal subunit.

Functionally, this protein binds specifically to 23S rRNA; its binding is stimulated by other ribosomal proteins, e.g. L4, L17, and L20. It is important during the early stages of 50S assembly. It makes multiple contacts with different domains of the 23S rRNA in the assembled 50S subunit and ribosome. In terms of biological role, the globular domain of the protein is located near the polypeptide exit tunnel on the outside of the subunit, while an extended beta-hairpin is found that lines the wall of the exit tunnel in the center of the 70S ribosome. The sequence is that of Large ribosomal subunit protein uL22 from Variovorax paradoxus (strain S110).